A 59-amino-acid chain; its full sequence is UPF0434 protein PMI0721 (59 aa).

This sequence belongs to the UPF0434 family.

The polypeptide is UPF0434 protein PMI0721 (Proteus mirabilis (strain HI4320)).